A 402-amino-acid polypeptide reads, in one-letter code: Tol-Pal system protein TolB (402 aa).

The signal sequence occupies residues 1 to 17; the sequence is MKKIVAIFLVFLGSLWA.

Belongs to the TolB family. As to quaternary structure, the Tol-Pal system is composed of five core proteins: the inner membrane proteins TolA, TolQ and TolR, the periplasmic protein TolB and the outer membrane protein Pal. They form a network linking the inner and outer membranes and the peptidoglycan layer.

Its subcellular location is the periplasm. Functionally, part of the Tol-Pal system, which plays a role in outer membrane invagination during cell division and is important for maintaining outer membrane integrity. The protein is Tol-Pal system protein TolB of Campylobacter jejuni subsp. jejuni serotype O:2 (strain ATCC 700819 / NCTC 11168).